The primary structure comprises 537 residues: Cytochrome P450 monooxygenase yanC (537 aa).

Positions 1–21 (MALVHLTALAACGLLLVILRA) are cleaved as a signal peptide. Heme is bound at residue Cys449.

The protein belongs to the cytochrome P450 family. Heme is required as a cofactor.

It participates in secondary metabolite biosynthesis; terpenoid biosynthesis. In terms of biological role, cytochrome P450 monooxygenase; part of the gene cluster that mediates the biosynthesis of yanuthone D, a fungal isoprenoid epoxycyclohexenone that acts as an antibiotic against fungi and bacteria. The first step of the pathway is the synthesis of 6-methylsalicylic acid (6-MSA) by the polyketide synthase yanA. 6-MSA is then converted to m-cresol by the decarboxylase yanB. The cytochrome P450 monooxygenase yanC then catalyzes the oxidation of m-cresol to toluquinol. Epoxidation of toluquinol is then performed by the short chain dehydrogenase yanD, with the help of yanE, and a further prenylation by yanG leads to 7-deacetoxyyanuthone A. The next step is the hydroxylation of C-22 of 7-deacetoxyyanuthone A by the cytochrome P450 monooxygenase yanH to yield 22-deacetylyanuthone A. O-Mevalon transferase yanI then attaches mevalon to the hydroxyl group of 22-deacetylyanuthone A to produce yanuthone E. Finally, the FAD-dependent monooxygenase yanF oxidizes the hydroxyl group at C15 of yanuthone E to form yanuthone D. Furthermore, several branching points in the pathway lead to the production of yanuthones F and G from 7-deacetoxyyanuthone A; yanuthones H and I from 22-deacetylyanuthone A; and yanuthone J from yanuthone E. YanC is also involved in the synthesis of yanuthone X1 which does not have 6-methylsalicylic acid (6-MSA) as precursor. The chain is Cytochrome P450 monooxygenase yanC from Aspergillus niger (strain ATCC 1015 / CBS 113.46 / FGSC A1144 / LSHB Ac4 / NCTC 3858a / NRRL 328 / USDA 3528.7).